Consider the following 252-residue polypeptide: MSNKVIEVKNLNTYFDDHNVLKNINTDIEKNSVTALIGPSGCGKSTFLRTLNRMNDLIPIFRKEGQILLDGKDIYDNNVDVVELRKKVGMVFQKANPFPKSIYDNVAYGLRIHGEKDEDKIEKIVKKSLKAAALWDEVEDKLDKSALGLSGGQQQRLCIARTIAVSPEIILMDEPCSALDPISTIKVEDLINQLKKDYTIVIVTHNMQQATRVSKYTSFFLNGEIIETGNTDDIFLNPKNKQTENYITGRFG.

The ABC transporter domain maps to 6-247 (IEVKNLNTYF…PKNKQTENYI (242 aa)). Residue 38–45 (GPSGCGKS) participates in ATP binding.

The protein belongs to the ABC transporter superfamily. Phosphate importer (TC 3.A.1.7) family. As to quaternary structure, the complex is composed of two ATP-binding proteins (PstB), two transmembrane proteins (PstC and PstA) and a solute-binding protein (PstS).

The protein localises to the cell membrane. The catalysed reaction is phosphate(out) + ATP + H2O = ADP + 2 phosphate(in) + H(+). Part of the ABC transporter complex PstSACB involved in phosphate import. Responsible for energy coupling to the transport system. This chain is Phosphate import ATP-binding protein PstB, found in Methanosphaera stadtmanae (strain ATCC 43021 / DSM 3091 / JCM 11832 / MCB-3).